A 155-amino-acid polypeptide reads, in one-letter code: Endoribonuclease YbeY (155 aa).

Residues H118, H122, and H128 each coordinate Zn(2+).

The protein belongs to the endoribonuclease YbeY family. Zn(2+) serves as cofactor.

Its subcellular location is the cytoplasm. Single strand-specific metallo-endoribonuclease involved in late-stage 70S ribosome quality control and in maturation of the 3' terminus of the 16S rRNA. In Bordetella petrii (strain ATCC BAA-461 / DSM 12804 / CCUG 43448), this protein is Endoribonuclease YbeY.